A 348-amino-acid chain; its full sequence is D-alanine--D-alanine ligase (348 aa).

The 203-residue stretch at 132–334 (KRVLESIGIP…YPDLIEELVT (203 aa)) folds into the ATP-grasp domain. 162 to 217 (LARLTFPIFVKPANMGSSVGISKAQTKVELRKAIQLALTYDSRVLIEQGVVAREIE) contacts ATP. Mg(2+) contacts are provided by D288, E301, and N303.

It belongs to the D-alanine--D-alanine ligase family. Mg(2+) serves as cofactor. The cofactor is Mn(2+).

The protein localises to the cytoplasm. The enzyme catalyses 2 D-alanine + ATP = D-alanyl-D-alanine + ADP + phosphate + H(+). Its pathway is cell wall biogenesis; peptidoglycan biosynthesis. Functionally, cell wall formation. The sequence is that of D-alanine--D-alanine ligase from Streptococcus pyogenes serotype M3 (strain SSI-1).